Consider the following 205-residue polypeptide: ATP-dependent dethiobiotin synthetase BioD (205 aa).

Threonine 16 contacts Mg(2+). The active site involves lysine 32. Threonine 36 is a binding site for substrate. Glutamate 97 is a Mg(2+) binding site. An ATP-binding site is contributed by glutamate 97–glycine 100.

The protein belongs to the dethiobiotin synthetase family. As to quaternary structure, homodimer. Mg(2+) is required as a cofactor.

It localises to the cytoplasm. The catalysed reaction is (7R,8S)-7,8-diammoniononanoate + CO2 + ATP = (4R,5S)-dethiobiotin + ADP + phosphate + 3 H(+). The protein operates within cofactor biosynthesis; biotin biosynthesis; biotin from 7,8-diaminononanoate: step 1/2. Its function is as follows. Catalyzes a mechanistically unusual reaction, the ATP-dependent insertion of CO2 between the N7 and N8 nitrogen atoms of 7,8-diaminopelargonic acid (DAPA, also called 7,8-diammoniononanoate) to form a ureido ring. In Paramagnetospirillum magneticum (strain ATCC 700264 / AMB-1) (Magnetospirillum magneticum), this protein is ATP-dependent dethiobiotin synthetase BioD.